A 695-amino-acid chain; its full sequence is Serotransferrin (695 aa).

The N-terminal stretch at 1 to 19 (MRLAAGALLACAALGLCLA) is a signal peptide. Transferrin-like domains follow at residues 25-347 (VRWC…NLRE) and 361-680 (VKWC…NLRK). 2 disulfides stabilise this stretch: cysteine 28-cysteine 67 and cysteine 38-cysteine 58. Arginine 42 carries the dimethylated arginine modification. Positions 82 and 114 each coordinate Fe(3+). 17 disulfide bridges follow: cysteine 137-cysteine 213, cysteine 156-cysteine 350, cysteine 177-cysteine 193, cysteine 180-cysteine 196, cysteine 190-cysteine 198, cysteine 246-cysteine 260, cysteine 358-cysteine 612, cysteine 364-cysteine 396, cysteine 374-cysteine 387, cysteine 421-cysteine 690, cysteine 436-cysteine 653, cysteine 468-cysteine 539, cysteine 492-cysteine 681, cysteine 502-cysteine 516, cysteine 513-cysteine 522, cysteine 579-cysteine 593, and cysteine 631-cysteine 636. Hydrogencarbonate-binding residues include threonine 139, arginine 143, alanine 145, and glycine 146. Tyrosine 207 is a binding site for Fe(3+). A Fe(3+)-binding site is contributed by histidine 268. Serine 389 bears the Phosphoserine mark. Residues aspartate 411 and tyrosine 444 each contribute to the Fe(3+) site. Positions 470, 474, 476, and 477 each coordinate hydrogencarbonate. The N-linked (GlcNAc...) asparagine glycan is linked to asparagine 509. Residue tyrosine 533 participates in Fe(3+) binding. Fe(3+) is bound at residue histidine 601. A Phosphoserine modification is found at serine 682.

It belongs to the transferrin family. In terms of assembly, monomer. Part of a complex composed of SLC40A1/ferroportin, TF/transferrin and HEPH/hephaestin that transfers iron from cells to transferrin. Expressed by the liver and secreted in plasma.

It localises to the secreted. In terms of biological role, transferrins are iron binding transport proteins which can bind two Fe(3+) ions in association with the binding of an anion, usually bicarbonate. It is responsible for the transport of iron from sites of absorption and heme degradation to those of storage and utilization. Serum transferrin may also have a further role in stimulating cell proliferation. This chain is Serotransferrin (TF), found in Oryctolagus cuniculus (Rabbit).